The primary structure comprises 71 residues: uncharacterized protein (71 aa).

This sequence belongs to the varicellovirus ORF57 protein family.

This is an uncharacterized protein from Homo sapiens (Human).